A 93-amino-acid chain; its full sequence is Corticostatin 1 (93 aa).

An N-terminal signal peptide occupies residues 1 to 19; the sequence is MRTLILLAAILLAALQAQA. A propeptide spanning residues 20-59 is cleaved from the precursor; that stretch reads ELFSVNVDEVLDQQQPGSDQDLVIHLTGEESSALQVPDTK. 3 cysteine pairs are disulfide-bonded: Cys62–Cys90, Cys64–Cys79, and Cys69–Cys89.

Belongs to the alpha-defensin family.

It localises to the secreted. Its function is as follows. Microbicidal activity and inhibits corticotropin (ACTH) stimulated corticosterone production. This is Corticostatin 1 from Oryctolagus cuniculus (Rabbit).